Consider the following 163-residue polypeptide: Nucleotide-binding protein BCG9842_B4128 (163 aa).

This sequence belongs to the YajQ family.

Functionally, nucleotide-binding protein. The sequence is that of Nucleotide-binding protein BCG9842_B4128 from Bacillus cereus (strain G9842).